The primary structure comprises 351 residues: Molybdate-binding protein MolA (351 aa).

Residues M1–A21 form the signal peptide. A Fe/B12 periplasmic-binding domain is found at R41–R322. Residues H47–Q48, Y217, R264, and G300–Y301 each bind molybdate.

It belongs to the bacterial solute-binding protein 8 family. As to quaternary structure, the complex is composed of two ATP-binding proteins (MolC), two transmembrane proteins (MolB) and a solute-binding protein (MolA).

The protein resides in the periplasm. The MolBCA complex shows a decrease in affinity in the presence of increasing concentrations of substrate and nucleotide. Part of the ABC transporter complex MolBCA involved in molybdate import. Functions as a low-affinity molybdate transporter. Binds to both molybdate and tungstate, but not to sulfate or phosphate. The chain is Molybdate-binding protein MolA from Haemophilus influenzae (strain ATCC 51907 / DSM 11121 / KW20 / Rd).